Consider the following 217-residue polypeptide: uncharacterized protein (217 aa).

Transmembrane regions (helical) follow at residues 13 to 35 (IWLTSTLLAMKYLTPLNLAIALL), 50 to 68 (FSLVFPILLSALAAYILYL), 75 to 94 (FLLAYSILFIALKFVNEWRI), 109 to 131 (MMALAYGAGLMEILAPLTLLFSL), 152 to 174 (YLAIIPLALIFYILSHPVLAAAV), and 194 to 216 (GFSLLFLNLLFVVGFLALDFAGL).

Its subcellular location is the cell membrane. This is an uncharacterized protein from Archaeoglobus fulgidus (strain ATCC 49558 / DSM 4304 / JCM 9628 / NBRC 100126 / VC-16).